The chain runs to 239 residues: tRNA (guanine-N(7)-)-methyltransferase (239 aa).

S-adenosyl-L-methionine-binding residues include Glu69, Glu94, Asp121, and Asp144. Asp144 is an active-site residue. Position 148 (Lys148) interacts with substrate. Positions 150-155 are interaction with RNA; the sequence is RHNKRR. Substrate is bound by residues Asp180 and 217 to 220; that span reads TKFE.

Belongs to the class I-like SAM-binding methyltransferase superfamily. TrmB family. In terms of assembly, monomer.

It carries out the reaction guanosine(46) in tRNA + S-adenosyl-L-methionine = N(7)-methylguanosine(46) in tRNA + S-adenosyl-L-homocysteine. It functions in the pathway tRNA modification; N(7)-methylguanine-tRNA biosynthesis. Its function is as follows. Catalyzes the formation of N(7)-methylguanine at position 46 (m7G46) in tRNA. The chain is tRNA (guanine-N(7)-)-methyltransferase from Klebsiella pneumoniae subsp. pneumoniae (strain ATCC 700721 / MGH 78578).